The chain runs to 381 residues: Outer membrane protein assembly factor BamB (381 aa).

A signal peptide spans M1 to A22. The N-palmitoyl cysteine moiety is linked to residue C23. C23 carries S-diacylglycerol cysteine lipidation.

Belongs to the BamB family. In terms of assembly, part of the Bam complex.

The protein resides in the cell outer membrane. Functionally, part of the outer membrane protein assembly complex, which is involved in assembly and insertion of beta-barrel proteins into the outer membrane. This Burkholderia pseudomallei (strain K96243) protein is Outer membrane protein assembly factor BamB.